The following is a 388-amino-acid chain: Cystathionine gamma-synthase (388 aa).

Residues 1–24 (MSEDRTGHQGISGPATRAIHAGYR) form a disordered region. Lys208 carries the post-translational modification N6-(pyridoxal phosphate)lysine.

The protein belongs to the trans-sulfuration enzymes family. In terms of assembly, homotetramer. Pyridoxal 5'-phosphate is required as a cofactor.

Its subcellular location is the cytoplasm. It carries out the reaction O-succinyl-L-homoserine + L-cysteine = L,L-cystathionine + succinate + H(+). Its function is as follows. Catalyzes the formation of L-cystathionine from O-succinyl-L-homoserine (OSHS) and L-cysteine, via a gamma-replacement reaction. In the absence of thiol, catalyzes gamma-elimination to form 2-oxobutanoate, succinate and ammonia. The protein is Cystathionine gamma-synthase (metB) of Mycobacterium bovis (strain ATCC BAA-935 / AF2122/97).